The chain runs to 352 residues: N-acetyl-gamma-glutamyl-phosphate reductase (352 aa).

Cysteine 155 is a catalytic residue.

Belongs to the NAGSA dehydrogenase family. Type 1 subfamily.

Its subcellular location is the cytoplasm. It catalyses the reaction N-acetyl-L-glutamate 5-semialdehyde + phosphate + NADP(+) = N-acetyl-L-glutamyl 5-phosphate + NADPH + H(+). Its pathway is amino-acid biosynthesis; L-arginine biosynthesis; N(2)-acetyl-L-ornithine from L-glutamate: step 3/4. In terms of biological role, catalyzes the NADPH-dependent reduction of N-acetyl-5-glutamyl phosphate to yield N-acetyl-L-glutamate 5-semialdehyde. The chain is N-acetyl-gamma-glutamyl-phosphate reductase from Brachyspira hyodysenteriae (strain ATCC 49526 / WA1).